The sequence spans 151 residues: GTP-dependent dephospho-CoA kinase (151 aa).

The GTP site is built by aspartate 30, valine 31, aspartate 49, lysine 51, and glutamate 104.

Belongs to the GTP-dependent DPCK family.

The enzyme catalyses 3'-dephospho-CoA + GTP = GDP + CoA + H(+). It participates in cofactor biosynthesis; coenzyme A biosynthesis. Catalyzes the GTP-dependent phosphorylation of the 3'-hydroxyl group of dephosphocoenzyme A to form coenzyme A (CoA). This chain is GTP-dependent dephospho-CoA kinase, found in Cenarchaeum symbiosum (strain A).